Reading from the N-terminus, the 465-residue chain is Phospholipase A1-II 5 (465 aa).

Catalysis depends on serine 233, which acts as the Acyl-ester intermediate. Catalysis depends on charge relay system residues serine 233, aspartate 297, and histidine 336.

The protein belongs to the AB hydrolase superfamily. Lipase family.

It localises to the cytoplasm. In terms of biological role, acylhydrolase that catalyzes the hydrolysis of phospholipids at the sn-1 position. This chain is Phospholipase A1-II 5, found in Oryza sativa subsp. indica (Rice).